A 21-amino-acid polypeptide reads, in one-letter code: Nigrocin-2JDa (21 aa).

Cys-15 and Cys-21 form a disulfide bridge.

As to expression, expressed by the skin glands.

The protein localises to the secreted. In terms of biological role, has antibacterial activity against E.coli ATCC 25992 (MIC=16 uM), E.coli CIB 84492 (MIC=16 uM), S.aureus ATCC 25923 (MIC=16 uM) and S.aureus CIB 85462 (MIC=8 uM). Has antifungal activity against C.albicans (MIC=63 uM). Has hemolytic activity against rabbit erythrocytes. This is Nigrocin-2JDa from Odorrana jingdongensis (Jingdong frog).